The chain runs to 104 residues: MHLLERQHDIQPLSRADMTIHLNGQPVAAAAGETVLNVLNAVGLRRLARNDHGQASGAFCGMGVCHCCLVAIDGRPKRRACQTVVRPGMRVETESNRFDQEERP.

The 82-residue stretch at 16–97 (ADMTIHLNGQ…GMRVETESNR (82 aa)) folds into the 2Fe-2S ferredoxin-type domain. Residues Cys60, Cys65, Cys68, and Cys81 each contribute to the [2Fe-2S] cluster site.

As to quaternary structure, heterotrimer of HcnA, HcnB and HcnC.

The protein resides in the cell membrane. It carries out the reaction glycine + 2 A = hydrogen cyanide + 2 AH2 + CO2. Its activity is regulated as follows. Oxygen is necessary for cyanogenesis. Activated by succinate, glycine methyl ester, glucose and D,L-methionine in addition to glycine. Phenazine methosulfate, methylene blue, 2,6-dichlorophenolindophenol (DCIP) and ferricyanide can replace oxygen for the reaction. Inhibited by pyrrolnitrin and acriflavine at 1 mM concentration. Functionally, a three-component membrane-bound flavoenzyme that catalyzes the formation of hydrogen cyanide, a secondary metabolite, by transfer of electrons to a cyanide-resistant branch of the aerobic respiratory chain. The polypeptide is Hydrogen cyanide synthase subunit HcnA (Pseudomonas aeruginosa (strain ATCC 15692 / DSM 22644 / CIP 104116 / JCM 14847 / LMG 12228 / 1C / PRS 101 / PAO1)).